An 84-amino-acid polypeptide reads, in one-letter code: Antimicrobial peptide MeuNaTxbeta-2 (84 aa).

A signal peptide spans M1–S20. One can recognise an LCN-type CS-alpha/beta domain in the interval D21–R83. 4 disulfide bridges follow: C32–C82, C36–C57, C43–C64, and C47–C66.

As to expression, expressed by the venom gland.

The protein localises to the secreted. Functionally, antimicrobial peptide with activity against both Gram-positive and -negative bacteria. The polypeptide is Antimicrobial peptide MeuNaTxbeta-2 (Mesobuthus eupeus (Lesser Asian scorpion)).